The sequence spans 404 residues: Probable eukaryotic initiation factor 4A (404 aa).

The interval 1–28 is disordered; sequence MAQQGKVEPQDQDSFLDDQPGIRPIPSF. A Q motif motif is present at residues 26–54; the sequence is PSFDDMPLHQNLLRGIYSHGFEKPSSIQQ. Residues 57–231 form the Helicase ATP-binding domain; the sequence is IVPFTRGGDI…KKFMRDPTRI (175 aa). ATP is bound at residue 70 to 77; sequence AQSGTGKT. The DEAD box motif lies at 179 to 182; the sequence is DEAD. A Helicase C-terminal domain is found at 242–402; it reads GIKQYFIAVE…ELPVDFAAYL (161 aa).

The protein belongs to the DEAD box helicase family. eIF4A subfamily. As to quaternary structure, eIF4F is a multi-subunit complex, the composition of which varies with external and internal environmental conditions. It is composed of at least EIF4A, EIF4E and EIF4G.

It catalyses the reaction ATP + H2O = ADP + phosphate + H(+). Its function is as follows. ATP-dependent RNA helicase which is a subunit of the eIF4F complex involved in cap recognition and is required for mRNA binding to ribosome. In the current model of translation initiation, eIF4A unwinds RNA secondary structures in the 5'-UTR of mRNAs which is necessary to allow efficient binding of the small ribosomal subunit, and subsequent scanning for the initiator codon. This chain is Probable eukaryotic initiation factor 4A, found in Trypanosoma cruzi (strain CL Brener).